Reading from the N-terminus, the 793-residue chain is E3 UFM1-protein ligase 1 (793 aa).

Alanine 2 carries the post-translational modification N-acetylalanine. The tract at residues 2 to 200 (ADAWEEIRRL…RGLFSAITRP (199 aa)) is mediates interaction with DDRGK1. Residues 2-212 (ADAWEEIRRL…VNSLISKYGF (211 aa)) are required for E3 UFM1-protein ligase activity. The interval 121–250 (DRLAEEVNDK…KAVFVPDIYS (130 aa)) is involved in CDK5RAP3-binding. Positions 200 to 400 (PTAVNSLISK…NPVHLITEED (201 aa)) are mediates interaction with TRIP4. The tract at residues 407 to 473 (LESVSTSKKD…SSHTGKKKPE (67 aa)) is disordered. Omega-N-methylarginine is present on arginine 433. Serine 458 is modified (phosphoserine). Positions 490–684 (IQDAPEEFIS…QLKVTEDPAL (195 aa)) are mediates interaction with CDK5RAP3. The residue at position 536 (threonine 536) is a Phosphothreonine.

Belongs to the UFL1 family. As to quaternary structure, catalytic component of the UFM1 ribosome E3 ligase (UREL) complex, composed of UFL1, DDRGK1 and CDK5RAP3. Interacts with E2-like enzyme UFC1. Interacts with RELA. Interacts with NBN; promoting recruitment to double-strand breaks following DNA damage. Interacts (when phosphorylated) with YWHAG/14-3-3-gamma; sequestering UFL1 and preventing its association with PDCD1/PD-1 substrate. In terms of processing, ubiquitinated, leading to its degradation by the proteasome. Interaction with CDK5RAP3 protects both proteins against ubiquitination and degradation via the proteasome. Phosphorylation at Thr-536 by AMPK promotes its interaction with YWHAG/14-3-3-gamma, thereby preventing UFL1 association with PDCD1/PD-1 substrate.

The protein localises to the endoplasmic reticulum membrane. The protein resides in the cytoplasm. It is found in the cytosol. It localises to the nucleus. Its subcellular location is the chromosome. In terms of biological role, E3 protein ligase that mediates ufmylation, the covalent attachment of the ubiquitin-like modifier UFM1 to lysine residues on target proteins, and which plays a key role in various processes, such as ribosome recycling, response to DNA damage, interferon response or reticulophagy (also called ER-phagy). Catalyzes ufmylation of many protein, such as CD274/PD-L1, CDK5RAP3, CYB5R3, DDRGK1, EIF6, histone H4, MRE11, P4HB, PDCD1/PD-1, TRIP4, RPN1, RPS20/uS10, RPL10/uL16, RPL26/uL24, SYVN1/HRD1 and TP53/p53. As part of the UREL complex, plays a key role in ribosome recycling by catalyzing mono-ufmylation of RPL26/uL24 subunit of the 60S ribosome. Ufmylation of RPL26/uL24 occurs on free 60S ribosomes following ribosome dissociation: it weakens the junction between post-termination 60S subunits and SEC61 translocons, promoting release and recycling of the large ribosomal subunit from the endoplasmic reticulum membrane. Ufmylation of RPL26/uL24 and subsequent 60S ribosome recycling either take place after normal termination of translation or after ribosome stalling during cotranslational translocation at the endoplasmic reticulum. Involved in reticulophagy in response to endoplasmic reticulum stress by mediating ufmylation of proteins such as CYB5R3 and RPN1, thereby promoting lysosomal degradation of ufmylated proteins. Ufmylation in response to endoplasmic reticulum stress is essential for processes such as hematopoiesis, blood vessel morphogenesis or inflammatory response. Mediates ufmylation of DDRGK1 and CDK5RAP3; the role of these modifications is however unclear: as both DDRGK1 and CDK5RAP3 act as substrate adapters for ufmylation, it is uncertain whether ufmylation of these proteins is, a collateral effect or is required for ufmylation. Acts as a negative regulator of T-cell activation by mediating ufmylation and stabilization of PDCD1/PD-1. Also involved in the response to DNA damage: recruited to double-strand break sites following DNA damage and mediates monoufmylation of histone H4 and ufmylation of MRE11. Mediates ufmylation of TP53/p53, promoting its stability. Catalyzes ufmylation of TRIP4, thereby playing a role in nuclear receptor-mediated transcription. Required for hematopoietic stem cell function and hematopoiesis. The protein is E3 UFM1-protein ligase 1 of Macaca fascicularis (Crab-eating macaque).